Consider the following 251-residue polypeptide: Alanyl-tRNA editing protein AlaX-M (251 aa).

Zn(2+) contacts are provided by histidine 107, histidine 111, cysteine 210, and histidine 214.

The protein belongs to the class-II aminoacyl-tRNA synthetase family. Editing domain AlaX-M subfamily. Zn(2+) serves as cofactor.

It is found in the cytoplasm. Its function is as follows. Functions in trans to edit the amino acid moiety from mischarged Ser-tRNA(Ala). Recognition depends, at least in part, on the acceptor stem of tRNA(Ala). The chain is Alanyl-tRNA editing protein AlaX-M (alaXM) from Methanosarcina mazei (strain ATCC BAA-159 / DSM 3647 / Goe1 / Go1 / JCM 11833 / OCM 88) (Methanosarcina frisia).